A 476-amino-acid polypeptide reads, in one-letter code: Surface membrane glycoprotein GP46/M-2 (476 aa).

The signal sequence occupies residues 1–32; sequence MAQCVRRLVLAAPLAAVVALLLCTSSAPVARA. 4 consecutive repeat copies span residues 107-130, 131-154, 155-178, and 179-202. The segment at 107 to 202 is 4 X 24 AA tandem repeats; the sequence is VMILALDFGA…FCGCVPDSWR (96 aa). Disordered stretches follow at residues 231–255 and 348–370; these read APGT…PSPG and ALSP…RRRA. C452 carries the GPI-anchor amidated cysteine lipid modification. The propeptide at 453–476 is removed in mature form; that stretch reads PALFDGARLRCCALVVCAGAAPAG.

It is found in the cell membrane. In Leishmania amazonensis, this protein is Surface membrane glycoprotein GP46/M-2.